We begin with the raw amino-acid sequence, 515 residues long: Alpha-1B adrenergic receptor (515 aa).

Residues 1-45 (MNPDLDTGHNTSAPAHWGELKDDNFTGPNQTSSNSTLPQLDVTRA) are Extracellular-facing. Asn10, Asn24, and Asn34 each carry an N-linked (GlcNAc...) asparagine glycan. A helical transmembrane segment spans residues 46-70 (ISVGLVLGAFILFAIVGNILVILSV). Over 71–83 (ACNRHLRTPTNYF) the chain is Cytoplasmic. The chain crosses the membrane as a helical span at residues 84–105 (IVNLAIADLLLSFTVLPFSATL). Over 106–115 (EVLGYWVLGR) the chain is Extracellular. Residues 116–141 (IFCDIWAAVDVLCCTASILSLCAISI) form a helical membrane-spanning segment. A disulfide bridge connects residues Cys118 and Cys195. Residues 142–161 (DRYIGVRYSLQYPTLVTRRK) are Cytoplasmic-facing. Residues 162-182 (AILALLSVWVLSTVISIGPLL) form a helical membrane-spanning segment. At 183-201 (GWKEPAPNDDKECGVTEEP) the chain is on the extracellular side. Residues 202-224 (FYALFSSLGSFYIPLAVILVMYC) form a helical membrane-spanning segment. The Cytoplasmic segment spans residues 225–295 (RVYIVAKRTT…FSREKKAAKT (71 aa)). Residue Thr264 is modified to Phosphothreonine. Residues 296–319 (LGIVVGMFILCWLPFFIALPLGSL) traverse the membrane as a helical segment. The Extracellular portion of the chain corresponds to 320-326 (FSTLKPP). The helical transmembrane segment at 327 to 351 (DAVFKVVFWLGYFNSCLNPIIYPCS) threads the bilayer. Over 352–515 (SKEFKRAFMR…SNMPLAPGHF (164 aa)) the chain is Cytoplasmic. Cys365 carries S-palmitoyl cysteine lipidation. Residues 368–378 (RGGRRRRRRRR) carry the Nuclear localization signal motif. Disordered stretches follow at residues 392–430 (GGSL…GYLG) and 474–515 (LGDP…PGHF). Composition is skewed to polar residues over residues 410–424 (SCMS…SASP) and 484–498 (GDTS…TDLA).

The protein belongs to the G-protein coupled receptor 1 family. Adrenergic receptor subfamily. ADRA1B sub-subfamily. In terms of assembly, homo- and heterooligomer. Heterooligomerizes with ADRA1B homooligomers in cardiac myocytes. Interacts with CAVIN4.

The protein resides in the nucleus membrane. Its subcellular location is the cell membrane. The protein localises to the cytoplasm. It localises to the membrane. It is found in the caveola. Its function is as follows. This alpha-adrenergic receptor mediates its action by association with G proteins that activate a phosphatidylinositol-calcium second messenger system. Its effect is mediated by G(q) and G(11) proteins. Nuclear ADRA1A-ADRA1B heterooligomers regulate phenylephrine (PE)-stimulated ERK signaling in cardiac myocytes. In Rattus norvegicus (Rat), this protein is Alpha-1B adrenergic receptor (Adra1b).